The primary structure comprises 853 residues: DNA mismatch repair protein MutS (853 aa).

614–621 (GPNMGGKS) provides a ligand contact to ATP.

The protein belongs to the DNA mismatch repair MutS family.

This protein is involved in the repair of mismatches in DNA. It is possible that it carries out the mismatch recognition step. This protein has a weak ATPase activity. The protein is DNA mismatch repair protein MutS of Shigella boydii serotype 18 (strain CDC 3083-94 / BS512).